Consider the following 344-residue polypeptide: Methionine import ATP-binding protein MetN (344 aa).

An ABC transporter domain is found at 2 to 241 (IKLEKISKIF…PQTQLAKEFI (240 aa)). 38-45 (GASGAGKS) lines the ATP pocket.

This sequence belongs to the ABC transporter superfamily. Methionine importer (TC 3.A.1.24) family. In terms of assembly, the complex is composed of two ATP-binding proteins (MetN), two transmembrane proteins (MetI) and a solute-binding protein (MetQ).

The protein resides in the cell inner membrane. The enzyme catalyses L-methionine(out) + ATP + H2O = L-methionine(in) + ADP + phosphate + H(+). It catalyses the reaction D-methionine(out) + ATP + H2O = D-methionine(in) + ADP + phosphate + H(+). In terms of biological role, part of the ABC transporter complex MetNIQ involved in methionine import. Responsible for energy coupling to the transport system. This chain is Methionine import ATP-binding protein MetN, found in Pasteurella multocida (strain Pm70).